A 208-amino-acid polypeptide reads, in one-letter code: V-type ATP synthase subunit D (208 aa).

This sequence belongs to the V-ATPase D subunit family.

Its function is as follows. Produces ATP from ADP in the presence of a proton gradient across the membrane. The sequence is that of V-type ATP synthase subunit D from Chlamydia caviae (strain ATCC VR-813 / DSM 19441 / 03DC25 / GPIC) (Chlamydophila caviae).